We begin with the raw amino-acid sequence, 679 residues long: Pescadillo homolog (679 aa).

The 121-residue stretch at 351 to 471 (EVASLFAPFT…KLLRADHYSP (121 aa)) folds into the BRCT domain. 2 disordered regions span residues 413–437 (ALSNGAPASNVQETENGGAAAPKAQ) and 480–679 (SPWV…AEAV). Positions 418-427 (APASNVQETE) are enriched in polar residues. 2 stretches are compositionally biased toward acidic residues: residues 503–528 (GEAEAFEDEGDEETAFDVDGDEDMEA) and 543–580 (DVADDSEDDSDDDESDEEDGPAGDEDDLDSDAESDISE). A coiled-coil region spans residues 573-679 (DAESDISEGE…EKAKAAAEAV (107 aa)). Basic and acidic residues-rich tracts occupy residues 582–614 (EAARLQHQRELEAEATGKKLEVKKPTRKEENAT), 623–634 (KRAEEEERERQK), 646–662 (KRIEYGENKRDNESENL), and 669–679 (VEKAKAAAEAV).

This sequence belongs to the pescadillo family. In terms of assembly, component of the NOP7 complex, composed of erb1, nop7 and ytm1. The complex is held together by erb1, which interacts with nop7 via its N-terminal domain and with ytm1 via a high-affinity interaction between the seven-bladed beta-propeller domains of the 2 proteins. The NOP7 complex associates with the 66S pre-ribosome.

Its subcellular location is the nucleus. It is found in the nucleolus. It localises to the nucleoplasm. Its function is as follows. Component of the NOP7 complex, which is required for maturation of the 25S and 5.8S ribosomal RNAs and formation of the 60S ribosome. The polypeptide is Pescadillo homolog (nop7) (Pyrenophora tritici-repentis (strain Pt-1C-BFP) (Wheat tan spot fungus)).